The following is a 117-amino-acid chain: UPF0295 protein Bsph_0336 (117 aa).

Transmembrane regions (helical) follow at residues 13 to 33 and 37 to 57; these read SFAL…IFFK and ILVL…TVVY.

This sequence belongs to the UPF0295 family.

The protein resides in the cell membrane. The sequence is that of UPF0295 protein Bsph_0336 from Lysinibacillus sphaericus (strain C3-41).